Consider the following 724-residue polypeptide: Pediocin PA-1 transport/processing ATP-binding protein PedD (724 aa).

The 128-residue stretch at 13–140 (QVDENDCGLA…KEWTQIAIII (128 aa)) folds into the Peptidase C39 domain. Cys19 is a catalytic residue. The next 6 membrane-spanning stretches (helical) occupy residues 170 to 190 (IGLIITAAAITTLISIAGAYF), 207 to 227 (LSLVAIGLIVAYAFQAIINYI), 284 to 304 (TTLTLFLDMWILLAVGLFLAY), 307 to 327 (INLFLCSLVVVPIYISIVWLF), 396 to 416 (IKAATKLILTIVILWWGTFFV), and 426 to 446 (LLTYNALLAYFLTPLENIINL). Residues 170–452 (IGLIITAAAI…IINLQPKLQA (283 aa)) form the ABC transmembrane type-1 domain. Positions 486–722 (IEVNHVSFNY…NGYYARLIHN (237 aa)) constitute an ABC transporter domain. 519 to 526 (GMSGSGKT) provides a ligand contact to ATP.

This sequence belongs to the ABC transporter superfamily. Pediocin PA-1 exporter (TC 3.A.1.112.2) family.

It is found in the cell membrane. Involved in the export process of the bacteriocin pediocin PA-1/AcH. Is also essential for pediocin production. The polypeptide is Pediocin PA-1 transport/processing ATP-binding protein PedD (pedD) (Pediococcus acidilactici).